A 457-amino-acid chain; its full sequence is Gustatory and odorant receptor 24 (457 aa).

The Cytoplasmic segment spans residues 1-115 (MSLYFNADTM…GGTAFVLASP (115 aa)). Residues 116–136 (SMTYCVLFFLLLTVYIAFILL) form a helical membrane-spanning segment. At 137–152 (NRIEIVRTLEGRFEES) the chain is on the extracellular side. Residues 153 to 173 (VIAYLFIVNILPILIIPLMWY) traverse the membrane as a helical segment. The Cytoplasmic segment spans residues 174–209 (ESRKVVSVVNGWVDFETVYRETTGRALELRLRTKAQ). Residues 210–230 (VIAILLPILCSLSVAITHVTM) traverse the membrane as a helical segment. At 231–237 (VDFKLLQ) the chain is on the extracellular side. The chain crosses the membrane as a helical span at residues 238-258 (VIPYCVLDTITYMMGGYWYMA). Topologically, residues 259–309 (CETLSITAKILAEDFQRALRHVGPAAKVSEYRSLWLRLSKLARDTGFSTCY) are cytoplasmic. The chain crosses the membrane as a helical span at residues 310 to 330 (TFTFICLYLFFIITLSIYGLM). At 331–341 (SQISDGFGVKD) the chain is on the extracellular side. The helical transmembrane segment at 342 to 362 (IGLAVTAFCSVGLLFYICDEA) threads the bilayer. The Cytoplasmic segment spans residues 363–421 (HYASFNVRTNFQKKLLMVELSWMNTDAQTEINMFLRATEMNPSSINLGGFFDVNRTLFK). The helical transmembrane segment at 422-442 (SLLATMVTYLVVLLQFQISIP) threads the bilayer. Residues 443-457 (DEPSAMLMHSNSSHS) are Extracellular-facing. Asparagine 453 is a glycosylation site (N-linked (GlcNAc...) asparagine).

It belongs to the insect chemoreceptor superfamily. Gustatory receptor (GR) family. Gr21a subfamily. As to expression, carbon dioxide-responsive neurons coexpress GPRgr22 and GPRgr24 in the maxillary palp, at both larval and adult life stages.

It is found in the cell membrane. Its function is as follows. Gustatory receptor which mediates acceptance or avoidance behavior, depending on its substrates. GPRgr22 and GPRgr24 together are sufficient for olfactory carbon dioxide-chemosensation. The protein is Gustatory and odorant receptor 24 of Anopheles gambiae (African malaria mosquito).